Reading from the N-terminus, the 692-residue chain is Methionine--tRNA ligase (692 aa).

The 'HIGH' region signature appears at 12–22 (PYANGPLHLGH). Zn(2+) is bound by residues C143, C146, C156, and C159. Positions 330 to 334 (KMSKS) match the 'KMSKS' region motif. Residue K333 coordinates ATP. A compositionally biased stretch (low complexity) spans 554–563 (AAAAPAAKPA). The interval 554-575 (AAAAPAAKPAAPAPAPAPAKDE) is disordered. The 104-residue stretch at 589–692 (DFAKLDLRIG…SGAQPGMPVR (104 aa)) folds into the tRNA-binding domain.

It belongs to the class-I aminoacyl-tRNA synthetase family. MetG type 1 subfamily. As to quaternary structure, homodimer. Requires Zn(2+) as cofactor.

It localises to the cytoplasm. The enzyme catalyses tRNA(Met) + L-methionine + ATP = L-methionyl-tRNA(Met) + AMP + diphosphate. In terms of biological role, is required not only for elongation of protein synthesis but also for the initiation of all mRNA translation through initiator tRNA(fMet) aminoacylation. This chain is Methionine--tRNA ligase, found in Stenotrophomonas maltophilia (strain K279a).